A 246-amino-acid chain; its full sequence is Acetoacetate decarboxylase (246 aa).

The active-site Schiff-base intermediate with acetoacetate is lysine 116.

The protein belongs to the ADC family.

It carries out the reaction acetoacetate + H(+) = acetone + CO2. In terms of biological role, catalyzes the conversion of acetoacetate to acetone and carbon dioxide. The sequence is that of Acetoacetate decarboxylase from Burkholderia lata (strain ATCC 17760 / DSM 23089 / LMG 22485 / NCIMB 9086 / R18194 / 383).